Consider the following 1155-residue polypeptide: RHO1 GDP-GTP exchange protein 1 (1155 aa).

Met-1 is modified (N-acetylmethionine). Positions 100-143 are enriched in polar residues; sequence NSSPQSFTGDQISPTNKKISINDSTRQDKGNSCTTTSSPSQKRS. Residues 100-249 form a disordered region; sequence NSSPQSFTGD…HSRSKSSPVS (150 aa). Residues Ser-154 and Ser-155 each carry the phosphoserine modification. Positions 155 to 167 are enriched in low complexity; that stretch reads SPSLLSFSKNSGS. The residue at position 180 (Thr-180) is a Phosphothreonine. Low complexity predominate over residues 190 to 227; it reads LHSSFNGKHSSSSTSSLFALESLKTQNRRSSNSSNHSS. Basic residues predominate over residues 228-243; that stretch reads QYRRHTNQHQRHHSRS. Ser-433 bears the Phosphoserine mark. In terms of domain architecture, DH spans 464-651; the sequence is KRQEAIYELF…KDLMKRIDRA (188 aa). The CNH domain occupies 842-1137; the sequence is TNRVNDVLIC…RMLKSYAKKI (296 aa).

Its function is as follows. Stimulates the exchange of RHO1 GDP-bound form into GTP-bound form. This Saccharomyces cerevisiae (strain ATCC 204508 / S288c) (Baker's yeast) protein is RHO1 GDP-GTP exchange protein 1 (ROM1).